The sequence spans 385 residues: 26S proteasome non-ATPase regulatory subunit 13 (385 aa).

The PCI domain occupies 176 to 347 (EFYKNALMYL…EIIHITWVTP (172 aa)).

Belongs to the proteasome subunit S11 family.

Acts as a regulatory subunit of the 26S proteasome which is involved in the ATP-dependent degradation of ubiquitinated proteins. The sequence is that of 26S proteasome non-ATPase regulatory subunit 13 (psmD13) from Dictyostelium discoideum (Social amoeba).